We begin with the raw amino-acid sequence, 502 residues long: ATP synthase subunit alpha (502 aa).

ATP is bound at residue 169–176; sequence GDRQTGKT.

The protein belongs to the ATPase alpha/beta chains family. As to quaternary structure, F-type ATPases have 2 components, CF(1) - the catalytic core - and CF(0) - the membrane proton channel. CF(1) has five subunits: alpha(3), beta(3), gamma(1), delta(1), epsilon(1). CF(0) has three main subunits: a(1), b(2) and c(9-12). The alpha and beta chains form an alternating ring which encloses part of the gamma chain. CF(1) is attached to CF(0) by a central stalk formed by the gamma and epsilon chains, while a peripheral stalk is formed by the delta and b chains.

Its subcellular location is the cell membrane. It carries out the reaction ATP + H2O + 4 H(+)(in) = ADP + phosphate + 5 H(+)(out). Functionally, produces ATP from ADP in the presence of a proton gradient across the membrane. The alpha chain is a regulatory subunit. The chain is ATP synthase subunit alpha from Staphylococcus aureus (strain bovine RF122 / ET3-1).